The following is a 506-amino-acid chain: Cytochrome P450 94B3 (506 aa).

Residues 2–22 traverse the membrane as a helical segment; sequence AFLLSFLILAFLITIIFFLSS. Cys447 lines the heme pocket.

This sequence belongs to the cytochrome P450 family. It depends on heme as a cofactor.

The protein localises to the membrane. Its subcellular location is the endoplasmic reticulum membrane. It carries out the reaction a jasmonyl-L-amino acid + reduced [NADPH--hemoprotein reductase] + O2 = a 12-hydroxyjasmonyl-L-alpha-amino acid + oxidized [NADPH--hemoprotein reductase] + H2O + H(+). The catalysed reaction is L-isoleucine-(+)-7-isojasmonate + NADPH + O2 + H(+) = L-isoleucine-(+)-12-hydroxy-7-isojasmonate + NADP(+) + H2O. It catalyses the reaction a jasmonyl-L-isoleucinate + NADPH + O2 + H(+) = L-isoleucine-12-hydroxyjasmonate + NADP(+) + H2O. Functionally, hydroxylase involved in the oxidation of the plant hormone jasmonoyl-L-isoleucine (JA-Ile), a bioactive phytohormone of the jasmonate-mediated signaling pathway. Converts JA-Ile to 12-hydroxy-JA-Ile. Exerts negative feedback control on JA-Ile levels and plays a key role in attenuation of jasmonate responses. Negatively regulates the expression of wound-induced genes TIFY11A/JAZ5, TIFY5A/JAZ8 and TIFY5A/JAZ10. Catalyzes the hydroxylation of jasmonoyl-L-valine (JA-Val), jasmonoyl-L-leucine (JA-Leu) and jasmonoyl-L-phenylalanine (JA-Phe) in vitro. Converts JA-Val, JA-Leu and JA-Phe to 12-hydroxy-JA-Val, 12-hydroxy-JA-Leu and 12-hydroxy-JA-Phe, respectively. The chain is Cytochrome P450 94B3 from Arabidopsis thaliana (Mouse-ear cress).